A 635-amino-acid chain; its full sequence is Threonine--tRNA ligase (635 aa).

In terms of domain architecture, TGS spans 1–61; sequence MPVIRLPDGS…TDDADLSIIT (61 aa). A catalytic region spans residues 242–533; sequence DHRKLGRQLD…LIENYAGAMP (292 aa). Zn(2+) contacts are provided by C333, H384, and H510.

This sequence belongs to the class-II aminoacyl-tRNA synthetase family. As to quaternary structure, homodimer. The cofactor is Zn(2+).

The protein localises to the cytoplasm. The enzyme catalyses tRNA(Thr) + L-threonine + ATP = L-threonyl-tRNA(Thr) + AMP + diphosphate + H(+). Functionally, catalyzes the attachment of threonine to tRNA(Thr) in a two-step reaction: L-threonine is first activated by ATP to form Thr-AMP and then transferred to the acceptor end of tRNA(Thr). Also edits incorrectly charged L-seryl-tRNA(Thr). The chain is Threonine--tRNA ligase from Methylobacillus flagellatus (strain ATCC 51484 / DSM 6875 / VKM B-1610 / KT).